The sequence spans 251 residues: Ubiquinone/menaquinone biosynthesis C-methyltransferase UbiE (251 aa).

S-adenosyl-L-methionine contacts are provided by residues threonine 74, aspartate 95, and asparagine 123–alanine 124.

Belongs to the class I-like SAM-binding methyltransferase superfamily. MenG/UbiE family.

It catalyses the reaction a 2-demethylmenaquinol + S-adenosyl-L-methionine = a menaquinol + S-adenosyl-L-homocysteine + H(+). The enzyme catalyses a 2-methoxy-6-(all-trans-polyprenyl)benzene-1,4-diol + S-adenosyl-L-methionine = a 5-methoxy-2-methyl-3-(all-trans-polyprenyl)benzene-1,4-diol + S-adenosyl-L-homocysteine + H(+). The protein operates within quinol/quinone metabolism; menaquinone biosynthesis; menaquinol from 1,4-dihydroxy-2-naphthoate: step 2/2. It participates in cofactor biosynthesis; ubiquinone biosynthesis. In terms of biological role, methyltransferase required for the conversion of demethylmenaquinol (DMKH2) to menaquinol (MKH2) and the conversion of 2-polyprenyl-6-methoxy-1,4-benzoquinol (DDMQH2) to 2-polyprenyl-3-methyl-6-methoxy-1,4-benzoquinol (DMQH2). The protein is Ubiquinone/menaquinone biosynthesis C-methyltransferase UbiE of Pseudoalteromonas translucida (strain TAC 125).